A 150-amino-acid chain; its full sequence is Large ribosomal subunit protein uL13 (150 aa).

It belongs to the universal ribosomal protein uL13 family. Part of the 50S ribosomal subunit.

Its function is as follows. This protein is one of the early assembly proteins of the 50S ribosomal subunit, although it is not seen to bind rRNA by itself. It is important during the early stages of 50S assembly. This chain is Large ribosomal subunit protein uL13, found in Mesoplasma florum (strain ATCC 33453 / NBRC 100688 / NCTC 11704 / L1) (Acholeplasma florum).